Consider the following 368-residue polypeptide: MEKRDYYEVLGVARDASAAEIKRAYRKLARTYHPDVNKEADADQKFKELSEAYEVLSDDNQRARYDQFGHQDPSQGGGGFGGAEGFGDIFDMFFGGGRRQDPNAPRKGQDLQYVEEIDFMEAFSGVEKVITIPVEEDCGTCHGSGAKPGTHPETCKRCGGSGHINVEQNTMFGRVVNQTTCSTCHGRGQIVKEPCETCRGAGRVRKNKDVRVKIPAGIDNGQQIRLAGKGEAGVNGGPFGDLYVVVRVREHELFERVDDHIVMDMPLTFAQATLGDEIEVPTVHGKVSLKIPAGTQTGSRFRLRGKGMPNVRSGHHGDQYVNVVIITPKNLTDRQKELLREFNEISDEKGVEEQHEGVFSRIKTFFTG.

The 65-residue stretch at 5 to 69 folds into the J domain; that stretch reads DYYEVLGVAR…NQRARYDQFG (65 aa). The CR-type zinc-finger motif lies at 125-207; the sequence is GVEKVITIPV…CRGAGRVRKN (83 aa). Cys-138, Cys-141, Cys-155, Cys-158, Cys-181, Cys-184, Cys-195, and Cys-198 together coordinate Zn(2+). 4 CXXCXGXG motif repeats span residues 138–145, 155–162, 181–188, and 195–202; these read CGTCHGSG, CKRCGGSG, CSTCHGRG, and CETCRGAG.

It belongs to the DnaJ family. In terms of assembly, homodimer. It depends on Zn(2+) as a cofactor.

The protein resides in the cytoplasm. Its function is as follows. Participates actively in the response to hyperosmotic and heat shock by preventing the aggregation of stress-denatured proteins and by disaggregating proteins, also in an autonomous, DnaK-independent fashion. Unfolded proteins bind initially to DnaJ; upon interaction with the DnaJ-bound protein, DnaK hydrolyzes its bound ATP, resulting in the formation of a stable complex. GrpE releases ADP from DnaK; ATP binding to DnaK triggers the release of the substrate protein, thus completing the reaction cycle. Several rounds of ATP-dependent interactions between DnaJ, DnaK and GrpE are required for fully efficient folding. Also involved, together with DnaK and GrpE, in the DNA replication of plasmids through activation of initiation proteins. This Exiguobacterium sibiricum (strain DSM 17290 / CCUG 55495 / CIP 109462 / JCM 13490 / 255-15) protein is Chaperone protein DnaJ.